Reading from the N-terminus, the 309-residue chain is G-protein coupled receptor 35 (309 aa).

Residues Met1–Tyr24 lie on the Extracellular side of the membrane. Residue Asn2 is glycosylated (N-linked (GlcNAc...) asparagine). Residues Ala25–Phe45 form a helical membrane-spanning segment. Topologically, residues Cys46–Arg56 are cytoplasmic. The helical transmembrane segment at Ile57–Leu77 threads the bilayer. The Extracellular segment spans residues His78–Gln90. Residues Cys89 and Cys162 are joined by a disulfide bond. A helical transmembrane segment spans residues Leu91–Val112. Residues Asp113–Ala135 are Cytoplasmic-facing. Residues Val136–Ile156 form a helical membrane-spanning segment. The Extracellular segment spans residues Gln157–Ala174. The helical transmembrane segment at Phe175–Val195 threads the bilayer. Residues Thr196–Met218 lie on the Cytoplasmic side of the membrane. The helical transmembrane segment at Val219 to Val239 threads the bilayer. The Extracellular segment spans residues Arg240–Leu258. A helical transmembrane segment spans residues Tyr259–Met279. Topologically, residues Ala280 to Ala309 are cytoplasmic. 2 positions are modified to phosphoserine: Ser287 and Ser294. Phosphoserine; by GRK5 and GRK6 occurs at positions 300 and 303. Thr307 is subject to Phosphothreonine.

It belongs to the G-protein coupled receptor 1 family. As to quaternary structure, interacts with GNA13. Interacts with ARRB2. Post-translationally, multiply phosphorylated in clusters of serines and threonines in the C-terminal tail. Phosphorylation of Ser-300 and Ser-303 is mediated by GRK5 and/or GRK6. As to expression, predominantly expressed in immune and gastrointestinal tissues.

The protein localises to the cell membrane. G-protein coupled receptor that binds to several ligands including the tryptophan metabolite kynurenic acid (KYNA), lysophosphatidic acid (LPA) or 5-hydroxyindoleacetic acid (5-HIAA) with high affinity, leading to rapid and transient activation of numerous intracellular signaling pathways. Plays a role in neutrophil recruitment to sites of inflammation and bacterial clearance through the major serotonin metabolite 5-HIAA that acts as a physiological ligand. Stimulates lipid metabolism, thermogenic, and anti-inflammatory gene expression in adipose tissue once activated by kynurenic acid. In macrophages, activation by lysophosphatidic acid promotes GPR35-induced signaling with a distinct transcriptional profile characterized by TNF production associated with ERK and NF-kappa-B activation. In turn, induces chemotaxis of macrophages. This is G-protein coupled receptor 35 (GPR35) from Homo sapiens (Human).